We begin with the raw amino-acid sequence, 264 residues long: Phosphatidylglycerol--prolipoprotein diacylglyceryl transferase (264 aa).

The next 7 helical transmembrane spans lie at 14–34, 60–80, 98–118, 128–148, 176–196, 203–223, and 240–260; these read IIFS…LIGF, LIYT…VFFY, GGMS…WVSF, ADFI…GNFI, SQLY…NWFI, GSVA…VEYV, and GQLL…WAYS. Arg-143 is a binding site for a 1,2-diacyl-sn-glycero-3-phospho-(1'-sn-glycerol).

It belongs to the Lgt family.

The protein resides in the cell inner membrane. The enzyme catalyses L-cysteinyl-[prolipoprotein] + a 1,2-diacyl-sn-glycero-3-phospho-(1'-sn-glycerol) = an S-1,2-diacyl-sn-glyceryl-L-cysteinyl-[prolipoprotein] + sn-glycerol 1-phosphate + H(+). It participates in protein modification; lipoprotein biosynthesis (diacylglyceryl transfer). In terms of biological role, catalyzes the transfer of the diacylglyceryl group from phosphatidylglycerol to the sulfhydryl group of the N-terminal cysteine of a prolipoprotein, the first step in the formation of mature lipoproteins. In Actinobacillus pleuropneumoniae serotype 7 (strain AP76), this protein is Phosphatidylglycerol--prolipoprotein diacylglyceryl transferase.